Here is a 318-residue protein sequence, read N- to C-terminus: NADH-ubiquinone oxidoreductase chain 1 (318 aa).

Transmembrane regions (helical) follow at residues 3–23, 69–89, 100–120, 135–155, 171–191, 213–233, 253–273, and 294–314; these read TTNI…LTLV, FMFT…WIPL, LGIL…LWSG, AVAQ…SLVL, HMWL…STLA, VEYA…NIIL, ELHT…FLWI, and LPLT…FASI.

This sequence belongs to the complex I subunit 1 family.

The protein resides in the mitochondrion inner membrane. It carries out the reaction a ubiquinone + NADH + 5 H(+)(in) = a ubiquinol + NAD(+) + 4 H(+)(out). Core subunit of the mitochondrial membrane respiratory chain NADH dehydrogenase (Complex I) that is believed to belong to the minimal assembly required for catalysis. Complex I functions in the transfer of electrons from NADH to the respiratory chain. The immediate electron acceptor for the enzyme is believed to be ubiquinone. This is NADH-ubiquinone oxidoreductase chain 1 (MT-ND1) from Choloepus didactylus (Southern two-toed sloth).